The following is a 614-amino-acid chain: Vitamin B12 transporter BtuB (614 aa).

Positions 1-20 (MIKKATLLTAFSVTAFSAWA) are cleaved as a signal peptide. The TonB box motif lies at 26–33 (DTLVVTAN). The 115-residue stretch at 38-152 (PRSAVLAPVT…IGGVVNIITT (115 aa)) folds into the TBDR plug domain. Residues S85, N92, and 110–111 (VS) each bind cyanocob(III)alamin. The 460-residue stretch at 155–614 (NPGTELTAGW…EYTLSGSYTF (460 aa)) folds into the TBDR beta-barrel domain. Beta stranded transmembrane passes span 158–165 (TELTAGWG), 169–178 (YQNYDISTQQ), and 184–195 (TRATLIGDYEYT). Residues D199, Q211, D213, and D215 each contribute to the Ca(2+) site. A run of 2 beta stranded transmembrane segments spans residues 217–227 (FLSKTLYGALE) and 232–248 (DRWS…NRTD). The Ca(2+) site is built by Y249 and D250. A251 is a cyanocob(III)alamin binding site. D261 is a binding site for Ca(2+). A run of 14 beta stranded transmembrane segments spans residues 263–277 (RKLY…LRFN), 279–296 (ERIQ…KDYN), 309–325 (TLDE…NSVV), 328–337 (HGNVGAGVDW), 353–369 (YDQR…QQLG), 371–381 (FTLEAAARSDD), 385–400 (FGRH…WEFI), 403–417 (YRFI…KAPN), 434–443 (KSKQWEGAFE), 449–458 (VSWRISGYRN), 473–490 (YYNE…TANF), 494–509 (PLTH…ARNA), 517–529 (RRSK…QLDW), and 535–550 (DWGV…YDSD). T309 is a binding site for cyanocob(III)alamin. R517 contributes to the cyanocob(III)alamin binding site. Residue Y551 participates in cyanocob(III)alamin binding. The next 3 membrane-spanning stretches (beta stranded) occupy residues 558–572 (TVKM…LTVA), 585–596 (IANLFDKDYETV), and 602–614 (AGRE…SYTF). Residues 597 to 614 (YGYQTAGREYTLSGSYTF) carry the TonB C-terminal box motif.

The protein belongs to the TonB-dependent receptor family. BtuB (TC 1.B.14.3.1) subfamily.

Its subcellular location is the cell outer membrane. Its function is as follows. Involved in the active translocation of vitamin B12 (cyanocobalamin) across the outer membrane to the periplasmic space. It derives its energy for transport by interacting with the trans-periplasmic membrane protein TonB. The chain is Vitamin B12 transporter BtuB from Salmonella choleraesuis (strain SC-B67).